The chain runs to 310 residues: Low-salt glycan biosynthesis protein Agl12 (310 aa).

Residues 7 to 13, 32 to 35, and 58 to 59 each bind NAD(+); these read GGAGFIG, DALT, and DI. Ser-82 contributes to the substrate binding site. Residue Thr-97 coordinates NAD(+). Substrate-binding positions include Thr-122 and 122–124; that span reads TDE. Asp-123 functions as the Proton donor in the catalytic mechanism. Active-site proton acceptor residues include Glu-124 and Tyr-146. 146-150 provides a ligand contact to NAD(+); sequence YSATK. Asn-175 is a substrate binding site. Residue Asn-176 participates in NAD(+) binding. Substrate contacts are provided by residues 185 to 186, 201 to 203, Arg-210, Asn-245, and 269 to 272; these read KL, PVY, and RAGH.

It belongs to the NAD(P)-dependent epimerase/dehydratase family. dTDP-glucose dehydratase subfamily. NAD(+) serves as cofactor.

It functions in the pathway protein modification; protein glycosylation. It participates in cell surface structure biogenesis; S-layer biogenesis. Lyase involved in N-glycan biosynthetic pathway that takes place under low-salt conditions (1.75 M instead of 3.4 M). Participates in the formation of the tetrasaccharide present at 'Asn-532' of S-layer glycoprotein Csg, consisting of a sulfated hexose, 2 hexoses and rhamnose. Involved in the addition of final rhamnose (sugar 4) of the tetrasaccharide on the dolichol phosphate carrier. This Haloferax volcanii (strain ATCC 29605 / DSM 3757 / JCM 8879 / NBRC 14742 / NCIMB 2012 / VKM B-1768 / DS2) (Halobacterium volcanii) protein is Low-salt glycan biosynthesis protein Agl12 (agl12).